The sequence spans 105 residues: MAAKIRKNDRVVVLTGKDKGKTGEVIEVLPKENRVKVRGVNLVKKHQRPTPTQQGGIVEIEAALHVSNVAHIDPKTSKPTRVGFKTLEDGRKVRVAKASGEIIDL.

The protein belongs to the universal ribosomal protein uL24 family. Part of the 50S ribosomal subunit.

One of two assembly initiator proteins, it binds directly to the 5'-end of the 23S rRNA, where it nucleates assembly of the 50S subunit. Its function is as follows. One of the proteins that surrounds the polypeptide exit tunnel on the outside of the subunit. This chain is Large ribosomal subunit protein uL24, found in Rhodospirillum centenum (strain ATCC 51521 / SW).